The primary structure comprises 460 residues: MSSTKLEDSLSRRNWSSASELNETQEPFLNPTDYDDEEFLRYLWREYLHPKEYEWVLIAGYIIVFVVALIGNVLVCVAVWKNHHMRTVTNYFIVNLSLADVLVTITCLPATLVVDITETWFFGQSLCKVIPYLQTVSVSVSVLTLSCIALDRWYAICHPLMFKSTAKRARNSIVVIWIVSCIIMIPQAIVMECSSMLPGLANKTTLFTVCDEHWGGEVYPKMYHICFFLVTYMAPLCLMILAYLQIFRKLWCRQIPGTSSVVQRKWKQQQPVSQPRGSGQQSKARISAVAAEIKQIRARRKTARMLMVVLLVFAICYLPISILNVLKRVFGMFTHTEDRETVYAWFTFSHWLVYANSAANPIIYNFLSGKFREEFKAAFSCCLGVHHRQGDRLARGRTSTESRKSLTTQISNFDNVSKLSEHVVLTSISTLPAANGAGPLQNWYLQQGVPSSLLSTWLEV.

At 1-54 (MSSTKLEDSLSRRNWSSASELNETQEPFLNPTDYDDEEFLRYLWREYLHPKEYE) the chain is on the extracellular side. N14 and N22 each carry an N-linked (GlcNAc...) asparagine glycan. The segment at 33–49 (DYDDEEFLRYLWREYLH) is required for response to orexin-A. A helical membrane pass occupies residues 55–75 (WVLIAGYIIVFVVALIGNVLV). Residues 76–88 (CVAVWKNHHMRTV) lie on the Cytoplasmic side of the membrane. The chain crosses the membrane as a helical span at residues 89–110 (TNYFIVNLSLADVLVTITCLPA). Residues 111–127 (TLVVDITETWFFGQSLC) are Extracellular-facing. A disulfide bridge links C127 with C210. The helical transmembrane segment at 128 to 150 (KVIPYLQTVSVSVSVLTLSCIAL) threads the bilayer. Residues 151–170 (DRWYAICHPLMFKSTAKRAR) are Cytoplasmic-facing. Residues 171–191 (NSIVVIWIVSCIIMIPQAIVM) traverse the membrane as a helical segment. Residues 192–222 (ECSSMLPGLANKTTLFTVCDEHWGGEVYPKM) lie on the Extracellular side of the membrane. N202 carries N-linked (GlcNAc...) asparagine glycosylation. A helical transmembrane segment spans residues 223–243 (YHICFFLVTYMAPLCLMILAY). The Cytoplasmic portion of the chain corresponds to 244-304 (LQIFRKLWCR…QIRARRKTAR (61 aa)). The helical transmembrane segment at 305–326 (MLMVVLLVFAICYLPISILNVL) threads the bilayer. Topologically, residues 327 to 342 (KRVFGMFTHTEDRETV) are extracellular. The helical transmembrane segment at 343-366 (YAWFTFSHWLVYANSAANPIIYNF) threads the bilayer. At 367 to 460 (LSGKFREEFK…SSLLSTWLEV (94 aa)) the chain is on the cytoplasmic side.

It belongs to the G-protein coupled receptor 1 family. As to expression, widely expressed. Isoform 2 not detected in skeletal muscle and kidney.

The protein resides in the cell membrane. Its function is as follows. Nonselective, high-affinity receptor for both orexin-A and orexin-B neuropeptides. Triggers an increase in cytoplasmic Ca(2+) levels in response to orexin-A binding. This is Orexin receptor type 2 (Hcrtr2) from Mus musculus (Mouse).